Reading from the N-terminus, the 133-residue chain is Profilin-2 (133 aa).

Belongs to the profilin family. In terms of assembly, occurs in many kinds of cells as a complex with monomeric actin in a 1:1 ratio.

It is found in the cytoplasm. It localises to the cytoskeleton. Functionally, binds to actin and affects the structure of the cytoskeleton. At high concentrations, profilin prevents the polymerization of actin, whereas it enhances it at low concentrations. By binding to PIP2, it inhibits the formation of IP3 and DG. This Artemisia vulgaris (Mugwort) protein is Profilin-2.